The primary structure comprises 354 residues: S-adenosylmethionine:tRNA ribosyltransferase-isomerase (354 aa).

Belongs to the QueA family. As to quaternary structure, monomer.

It is found in the cytoplasm. The catalysed reaction is 7-aminomethyl-7-carbaguanosine(34) in tRNA + S-adenosyl-L-methionine = epoxyqueuosine(34) in tRNA + adenine + L-methionine + 2 H(+). It participates in tRNA modification; tRNA-queuosine biosynthesis. Transfers and isomerizes the ribose moiety from AdoMet to the 7-aminomethyl group of 7-deazaguanine (preQ1-tRNA) to give epoxyqueuosine (oQ-tRNA). This chain is S-adenosylmethionine:tRNA ribosyltransferase-isomerase, found in Salmonella dublin (strain CT_02021853).